A 316-amino-acid polypeptide reads, in one-letter code: Transcription initiation factor IIB (316 aa).

The segment at 11–42 (PKVTCPNHPDALLVEDYRAGDMICSECGLVVG) adopts a TFIIB-type zinc-finger fold. Positions 15, 18, 34, and 37 each coordinate Zn(2+). Repeat copies occupy residues 124–200 (MSDR…LILK) and 218–294 (FCSN…LIYP).

Belongs to the TFIIB family.

It is found in the nucleus. It localises to the chromosome. The catalysed reaction is L-lysyl-[protein] + acetyl-CoA = N(6)-acetyl-L-lysyl-[protein] + CoA + H(+). Functionally, general transcription factor that plays a role in transcription initiation by RNA polymerase II (Pol II). Involved in the pre-initiation complex (PIC) formation and Pol II recruitment at promoter DNA. Together with the TATA box-bound TBP forms the core initiation complex and provides a bridge between TBP and the Pol II-TFIIF complex. Released from the PIC early following the onset of transcription during the initiation and elongation transition and reassociates with TBP during the next transcription cycle. Associates with chromatin to core promoter-specific regions. Binds to two distinct DNA core promoter consensus sequence elements in a TBP-independent manner; these IIB-recognition elements (BREs) are localized immediately upstream (BREu), 5'-[GC][GC][GA]CGCC-3', and downstream (BREd), 5'-[GA]T[TGA][TG][GT][TG][TG]-3', of the TATA box element. Modulates transcription start site selection. Also exhibits autoacetyltransferase activity that contributes to the activated transcription. The polypeptide is Transcription initiation factor IIB (Xenopus laevis (African clawed frog)).